The following is a 168-amino-acid chain: Ribosome maturation factor RimM (168 aa).

The PRC barrel domain maps to 94–167 (DGQYYYHQII…FVTVELMEGL (74 aa)).

This sequence belongs to the RimM family. Binds ribosomal protein uS19.

Its subcellular location is the cytoplasm. An accessory protein needed during the final step in the assembly of 30S ribosomal subunit, possibly for assembly of the head region. Essential for efficient processing of 16S rRNA. May be needed both before and after RbfA during the maturation of 16S rRNA. It has affinity for free ribosomal 30S subunits but not for 70S ribosomes. The chain is Ribosome maturation factor RimM from Limosilactobacillus reuteri (strain DSM 20016) (Lactobacillus reuteri).